A 1499-amino-acid polypeptide reads, in one-letter code: Pleiotropic ABC efflux transporter of multiple drugs CDR1 (1499 aa).

The segment covering methionine 1–aspartate 11 has biased composition (basic and acidic residues). A disordered region spans residues methionine 1–histidine 29. Residues asparagine 24, asparagine 96, and asparagine 99 are each glycosylated (N-linked (GlcNAc...) asparagine). The region spanning valine 146–glutamate 399 is the ABC transporter 1 domain. Serine 307 is subject to Phosphoserine. A glycan (N-linked (GlcNAc...) asparagine) is linked at asparagine 323. Serine 484 is modified (phosphoserine). Residues glycine 510 to phenylalanine 530 form a helical membrane-spanning segment. The N-linked (GlcNAc...) asparagine glycan is linked to asparagine 537. 5 consecutive transmembrane segments (helical) span residues alanine 548 to phenylalanine 568, valine 597 to phenylalanine 617, glycine 622 to phenylalanine 642, alanine 654 to isoleucine 674, and glycine 763 to glutamate 783. N-linked (GlcNAc...) asparagine glycosylation occurs at asparagine 813. The ABC transporter 2 domain occupies phenylalanine 857–glycine 1099. Glycine 893–threonine 900 serves as a coordination point for ATP. Residue asparagine 1159 is glycosylated (N-linked (GlcNAc...) asparagine). 3 helical membrane-spanning segments follow: residues tyrosine 1193–phenylalanine 1213, alanine 1228–valine 1248, and isoleucine 1278–phenylalanine 1298. Asparagine 1301 is a glycosylation site (N-linked (GlcNAc...) asparagine). Helical transmembrane passes span leucine 1314–isoleucine 1334 and alanine 1342–valine 1362. A glycan (N-linked (GlcNAc...) asparagine) is linked at asparagine 1412. A helical transmembrane segment spans residues tryptophan 1466 to leucine 1486.

This sequence belongs to the ABC transporter superfamily. Post-translationally, phosphorylated at Ser-307 and Ser-484. Ser-307 and Ser-484 are dephosphorylated on glucose depletion and independently rephosphorylated during glucose exposure or under stress.

The protein resides in the cell membrane. Its activity is regulated as follows. Inhibited by clorgyline. Inhibited by RC21v3, a 4-methoxy-2,3,6-trimethylbenzenesulphonyl derivative of the D-octapeptide D-FFKWQRRR, via the interaction with the ectodomain. FK506, enniatin, milbemycin alpha-11, and milbemycin beta-9 also inhibit CDR1 activity. Inhibited by milbemycin A3/A4 oxim derivatives. Its function is as follows. Pleiotropic ABC efflux transporter that transports and confers resistance to structurally and functionally unrelated compounds including rhodamine 6G, Nile red, caspofungin, cycloheximide, or azoles such as fluconazole, itraconazole, ketoconazole, posaconazole, voriconazole, and isavuconazole. Chlorbromuron, itraconazole, yohimbine, ketoconazole, miconazole, clotrimazole, DE-11, tamoxifen, quinidine, verapamil can compete for rhodamine 6G's binding site(s) while compounds such as propanil, chloramphenicol, benomyl, voriconazole, tritylimidazole, ketoconazole, miconazole, tamoxifen, gefitinib shared binding site(s) with fluconazole. Nile red mediated efflux appears to be relatively more specific since only five compounds such as ZW3-12, rhodamine 123, miconazole, clotrimazole, and itraconazole can inhibit its accumulation. Does not use as substrates 4-nitroquinoline 1-oxide (4-NQO) and disulfiram. Does not play a role in the azole resistance in mature biofilms. The polypeptide is Pleiotropic ABC efflux transporter of multiple drugs CDR1 (Candida glabrata (strain ATCC 2001 / BCRC 20586 / JCM 3761 / NBRC 0622 / NRRL Y-65 / CBS 138) (Yeast)).